The primary structure comprises 241 residues: Ubiquinone biosynthesis O-methyltransferase (241 aa).

Residues R42, G62, D83, and M127 each contribute to the S-adenosyl-L-methionine site.

This sequence belongs to the methyltransferase superfamily. UbiG/COQ3 family.

The enzyme catalyses a 3-demethylubiquinol + S-adenosyl-L-methionine = a ubiquinol + S-adenosyl-L-homocysteine + H(+). It catalyses the reaction a 3-(all-trans-polyprenyl)benzene-1,2-diol + S-adenosyl-L-methionine = a 2-methoxy-6-(all-trans-polyprenyl)phenol + S-adenosyl-L-homocysteine + H(+). It participates in cofactor biosynthesis; ubiquinone biosynthesis. Functionally, O-methyltransferase that catalyzes the 2 O-methylation steps in the ubiquinone biosynthetic pathway. In Pectobacterium atrosepticum (strain SCRI 1043 / ATCC BAA-672) (Erwinia carotovora subsp. atroseptica), this protein is Ubiquinone biosynthesis O-methyltransferase.